The following is a 160-amino-acid chain: Transcription elongation factor GreA (160 aa).

Residues 1–72 (MAEKTYPMTL…QISSLETKIR (72 aa)) adopt a coiled-coil conformation.

Belongs to the GreA/GreB family.

Its function is as follows. Necessary for efficient RNA polymerase transcription elongation past template-encoded arresting sites. The arresting sites in DNA have the property of trapping a certain fraction of elongating RNA polymerases that pass through, resulting in locked ternary complexes. Cleavage of the nascent transcript by cleavage factors such as GreA or GreB allows the resumption of elongation from the new 3'terminus. GreA releases sequences of 2 to 3 nucleotides. This Streptococcus pneumoniae (strain ATCC 700669 / Spain 23F-1) protein is Transcription elongation factor GreA.